A 146-amino-acid polypeptide reads, in one-letter code: Anti-sigma F factor (146 aa).

This sequence belongs to the anti-sigma-factor family.

It carries out the reaction L-seryl-[protein] + ATP = O-phospho-L-seryl-[protein] + ADP + H(+). It catalyses the reaction L-threonyl-[protein] + ATP = O-phospho-L-threonyl-[protein] + ADP + H(+). Functionally, binds to sigma F and blocks its ability to form an RNA polymerase holoenzyme (E-sigma F). Phosphorylates SpoIIAA on a serine residue. This phosphorylation may enable SpoIIAA to act as an anti-anti-sigma factor that counteracts SpoIIAB and thus releases sigma F from inhibition. In Geobacillus kaustophilus (strain HTA426), this protein is Anti-sigma F factor.